We begin with the raw amino-acid sequence, 204 residues long: Ribonuclease HII (204 aa).

The 188-residue stretch at 17 to 204 (TLIAGVDEVG…KPVKKVLGLL (188 aa)) folds into the RNase H type-2 domain. 3 residues coordinate a divalent metal cation: Asp23, Glu24, and Asp115.

The protein belongs to the RNase HII family. Mn(2+) serves as cofactor. It depends on Mg(2+) as a cofactor.

It is found in the cytoplasm. It catalyses the reaction Endonucleolytic cleavage to 5'-phosphomonoester.. In terms of biological role, endonuclease that specifically degrades the RNA of RNA-DNA hybrids. This chain is Ribonuclease HII, found in Psychromonas ingrahamii (strain DSM 17664 / CCUG 51855 / 37).